The primary structure comprises 333 residues: Acetyl-coenzyme A carboxylase carboxyl transferase subunit alpha (333 aa).

A CoA carboxyltransferase C-terminal domain is found at 48 to 308; sequence LLEQKVDALR…KEMLVEELRD (261 aa).

It belongs to the AccA family. As to quaternary structure, acetyl-CoA carboxylase is a heterohexamer composed of biotin carboxyl carrier protein (AccB), biotin carboxylase (AccC) and two subunits each of ACCase subunit alpha (AccA) and ACCase subunit beta (AccD).

The protein localises to the cytoplasm. It catalyses the reaction N(6)-carboxybiotinyl-L-lysyl-[protein] + acetyl-CoA = N(6)-biotinyl-L-lysyl-[protein] + malonyl-CoA. It participates in lipid metabolism; malonyl-CoA biosynthesis; malonyl-CoA from acetyl-CoA: step 1/1. Its function is as follows. Component of the acetyl coenzyme A carboxylase (ACC) complex. First, biotin carboxylase catalyzes the carboxylation of biotin on its carrier protein (BCCP) and then the CO(2) group is transferred by the carboxyltransferase to acetyl-CoA to form malonyl-CoA. This Chlorobium limicola (strain DSM 245 / NBRC 103803 / 6330) protein is Acetyl-coenzyme A carboxylase carboxyl transferase subunit alpha.